Consider the following 510-residue polypeptide: Metalloprotease TIKI homolog (510 aa).

The N-terminal stretch at 1 to 30 (MQVKIVQVFPCLVLLVKLVLLSVLLPSATG) is a signal peptide. Residues 31-489 (SYHCSNNATQ…FIPSASSGLR (459 aa)) are Extracellular-facing. Residues asparagine 37, asparagine 98, asparagine 108, asparagine 141, asparagine 223, asparagine 281, asparagine 322, asparagine 383, and asparagine 417 are each glycosylated (N-linked (GlcNAc...) asparagine). Over residues 435–471 (TSLNSATASTTVATPTSSVTPPTSSSSQTRSLTISDS) the composition is skewed to low complexity. A disordered region spans residues 435-477 (TSLNSATASTTVATPTSSVTPPTSSSSQTRSLTISDSQRTSDD). A helical transmembrane segment spans residues 490–510 (YNIGLVCVTLFFVLLIITSAL).

It belongs to the TIKI family. Mn(2+) serves as cofactor. The cofactor is Co(2+).

Its subcellular location is the membrane. Metalloprotease. This chain is Metalloprotease TIKI homolog, found in Amphimedon queenslandica (Sponge).